The primary structure comprises 433 residues: Putative zinc metalloprotease BB_0118 (433 aa).

Histidine 17 serves as a coordination point for Zn(2+). Glutamate 18 is an active-site residue. Histidine 21 provides a ligand contact to Zn(2+). The chain crosses the membrane as a helical span at residues 98-120 (ILIYFAGPLFNLIFSFIVFIFIS). Residues 193–265 (TVSLQDFLKE…VVEIKFSRNG (73 aa)) enclose the PDZ domain. 3 helical membrane passes run 334–356 (VSGP…LYWI), 366–388 (LAGM…FISF), and 401–423 (TIYS…GLFN).

This sequence belongs to the peptidase M50B family. Zn(2+) serves as cofactor.

It localises to the cell inner membrane. This Borreliella burgdorferi (strain ATCC 35210 / DSM 4680 / CIP 102532 / B31) (Borrelia burgdorferi) protein is Putative zinc metalloprotease BB_0118.